The chain runs to 156 residues: Ribonuclease H (156 aa).

The RNase H type-1 domain occupies 1–142 (MNKQVEIFTD…CDELARQAAE (142 aa)). Asp-10, Glu-48, Asp-70, and Asp-134 together coordinate Mg(2+). A disordered region spans residues 135–156 (ELARQAAENPTEDDIGYQPEPQ).

The protein belongs to the RNase H family. In terms of assembly, monomer. It depends on Mg(2+) as a cofactor.

The protein localises to the cytoplasm. It catalyses the reaction Endonucleolytic cleavage to 5'-phosphomonoester.. Functionally, endonuclease that specifically degrades the RNA of RNA-DNA hybrids. This is Ribonuclease H from Vibrio cholerae serotype O1 (strain M66-2).